We begin with the raw amino-acid sequence, 485 residues long: Aldehyde dehydrogenase family 3 member A2 (485 aa).

Residues 1–463 (MELEVRRVRQ…FLLKRFNKEK (463 aa)) lie on the Cytoplasmic side of the membrane. 185-190 (GNTAVG) provides a ligand contact to NAD(+). Residues E207 and C241 contribute to the active site. Position 293 is a phosphoserine (S293). A helical transmembrane segment spans residues 464 to 484 (LGLLLLTFLGIVAAVLVKAEY). The Prevents secretion from ER signature appears at 481 to 484 (KAEY).

The protein belongs to the aldehyde dehydrogenase family. Homodimer.

It localises to the microsome membrane. It is found in the endoplasmic reticulum membrane. The enzyme catalyses an aldehyde + NAD(+) + H2O = a carboxylate + NADH + 2 H(+). The catalysed reaction is a fatty aldehyde + NAD(+) + H2O = a fatty acid + NADH + 2 H(+). It carries out the reaction (2E)-hexadecenal + NAD(+) + H2O = (E)-hexadec-2-enoate + NADH + 2 H(+). It catalyses the reaction hexadecanoate + NADH + 2 H(+) = hexadecanal + NAD(+) + H2O. The enzyme catalyses 22-oxodocosanoate + NAD(+) + H2O = docosanedioate + NADH + 2 H(+). The catalysed reaction is 2,6,10,14-tetramethylpentadecanal + NAD(+) + H2O = 2,6,10,14-tetramethylpentadecanoate + NADH + 2 H(+). It carries out the reaction octadecanal + NAD(+) + H2O = octadecanoate + NADH + 2 H(+). It catalyses the reaction dodecanoate + NADH + 2 H(+) = dodecanal + NAD(+) + H2O. The enzyme catalyses decanal + NAD(+) + H2O = decanoate + NADH + 2 H(+). The catalysed reaction is tetradecanal + NAD(+) + H2O = tetradecanoate + NADH + 2 H(+). It carries out the reaction octanal + NAD(+) + H2O = octanoate + NADH + 2 H(+). It catalyses the reaction heptanal + NAD(+) + H2O = heptanoate + NADH + 2 H(+). The enzyme catalyses (2E,6E)-farnesal + NAD(+) + H2O = (2E,6E)-farnesoate + NADH + 2 H(+). Functionally, catalyzes the oxidation of medium and long-chain aliphatic aldehydes to fatty acids. Active on a variety of saturated and unsaturated aliphatic aldehydes between 6 and 24 carbons in length. Responsible for conversion of the sphingosine 1-phosphate (S1P) degradation product hexadecenal to hexadecenoic acid. This Pongo abelii (Sumatran orangutan) protein is Aldehyde dehydrogenase family 3 member A2 (ALDH3A2).